The primary structure comprises 314 residues: Lysophospholipase D GDPD1 (314 aa).

Residues 1–3 (MSS) lie on the Extracellular side of the membrane. The helical transmembrane segment at 4–24 (TAAFCLLSTLGGYLVTSFLLL) threads the bilayer. The Cytoplasmic segment spans residues 25 to 195 (KYPALLHQRK…VDKCYKENSD (171 aa)). Residues 40-309 (SRHISHRGGA…DYPTKLKEFL (270 aa)) form the GP-PDE domain. Positions 72, 74, and 87 each coordinate a divalent metal cation. The chain crosses the membrane as a helical span at residues 196-216 (IPILFSLQRVLLILGLFFTGL). At 217–314 (LPFVPIREQF…LKEFLNNMSA (98 aa)) the chain is on the extracellular side.

This sequence belongs to the glycerophosphoryl diester phosphodiesterase family.

It is found in the cytoplasm. The protein resides in the membrane. It localises to the perinuclear region. The protein localises to the endoplasmic reticulum. It catalyses the reaction a 1-O-alkyl-sn-glycero-3-phosphocholine + H2O = a 1-O-alkyl-sn-glycero-3-phosphate + choline + H(+). It carries out the reaction 1-hexadecanoyl-sn-glycero-3-phosphocholine + H2O = 1-hexadecanoyl-sn-glycero-3-phosphate + choline + H(+). The catalysed reaction is 1-hexadecanoyl-sn-glycero-3-phosphoethanolamine + H2O = 1-hexadecanoyl-sn-glycero-3-phosphate + ethanolamine + H(+). The enzyme catalyses N-hexadecanoyl-sn-glycero-3-phosphoethanolamine + H2O = N-hexadecanoylethanolamine + sn-glycerol 3-phosphate + H(+). It catalyses the reaction N-(5Z,8Z,11Z,14Z-eicosatetraenoyl)-1-(9Z-octadecenoyl)-sn-glycero-3-phosphoethanolamine + H2O = N-(5Z,8Z,11Z,14Z-eicosatetraenoyl)-ethanolamine + 1-(9Z-octadecenoyl)-sn-glycero-3-phosphate + H(+). It carries out the reaction N,1-di-(9Z-octadecenoyl)-sn-glycero-3-phosphoethanolamine + H2O = N-(9Z-octadecenoyl) ethanolamine + 1-(9Z-octadecenoyl)-sn-glycero-3-phosphate + H(+). The catalysed reaction is N-hexadecanoyl-1-(9Z-octadecenoyl)-sn-glycero-3-phosphoethanolamine + H2O = N-hexadecanoylethanolamine + 1-(9Z-octadecenoyl)-sn-glycero-3-phosphate + H(+). The enzyme catalyses 1-O-hexadecyl-sn-glycero-3-phosphocholine + H2O = 1-O-hexadecyl-sn-glycero-3-phosphate + choline + H(+). It catalyses the reaction 1-(9Z-octadecenoyl)-sn-glycero-3-phosphocholine + H2O = 1-(9Z-octadecenoyl)-sn-glycero-3-phosphate + choline + H(+). It carries out the reaction N,1-dihexadecanoyl-sn-glycero-3-phosphoethanolamine + H2O = N-hexadecanoylethanolamine + 1-hexadecanoyl-sn-glycero-3-phosphate + H(+). The catalysed reaction is 1-O-(1Z-octadecenyl)-sn-glycero-3-phospho-(N-5Z,8Z,11Z,14Z-eicosatetraenoyl)-ethanolamine + H2O = 1-O-(1Z-octadecenyl)-sn-glycero-3-phosphate + N-(5Z,8Z,11Z,14Z-eicosatetraenoyl)-ethanolamine + H(+). The enzyme catalyses 1-O-(1Z-octadecenyl)-sn-glycero-3-phospho-(N-9Z-octadecenoyl)-ethanolamine + H2O = 1-O-(1Z-octadecenyl)-sn-glycero-3-phosphate + N-(9Z-octadecenoyl) ethanolamine + H(+). It catalyses the reaction 1-O-(1Z-octadecenyl)-sn-glycero-3-phospho-N-hexadecanoyl-ethanolamine + H2O = 1-O-(1Z-octadecenyl)-sn-glycero-3-phosphate + N-hexadecanoylethanolamine + H(+). Its activity is regulated as follows. Lysophospholipase D activity is increased by magnesium and manganese and inhibited by calcium in a concentration dependent manner. Loss of lysophospholipase D activity by addition of EDTA. Its function is as follows. Hydrolyzes lysoglycerophospholipids to produce lysophosphatidic acid (LPA) and the corresponding amines. Shows a preference for 1-O-alkyl-sn-glycero-3-phosphocholine (lyso-PAF), lysophosphatidylethanolamine (lyso-PE) and lysophosphatidylcholine (lyso-PC). May be involved in bioactive N-acylethanolamine biosynthesis from both N-acyl-lysoplasmenylethanolamin (N-acyl-lysoPlsEt) and N-acyl-lysophosphatidylethanolamin (N-acyl-lysoPE). In addition, hydrolyzes glycerophospho-N-acylethanolamine to N-acylethanolamine. Does not display glycerophosphodiester phosphodiesterase activity, since it cannot hydrolyze either glycerophosphoinositol or glycerophosphocholine. In Rattus norvegicus (Rat), this protein is Lysophospholipase D GDPD1.